Reading from the N-terminus, the 535-residue chain is Nuclear/nucleolar GTPase 2 (535 aa).

The disordered stretch occupies residues 1–42 (MAKKKERAVNVSGKPRHSLDVNRANDKKGAGGGAGGGGGGRS). The span at 17-29 (HSLDVNRANDKKG) shows a compositional bias: basic and acidic residues. Residues 30-41 (AGGGAGGGGGGR) show a composition bias toward gly residues. Residues 213 to 374 (WGELYKVIDS…LIDCPGVVYQ (162 aa)) form the CP-type G domain. Residues 261-264 (NKCD) are G4. Residues 290 to 292 (SIN) are G5. The G1 stretch occupies residues 323 to 330 (GYPNVGKS). Positions 349-353 (GETKV) are G2. The tract at residues 367–370 (DCPG) is G3. The disordered stretch occupies residues 464–495 (FFVPPPQQGEDSPSETAEPVDKSDEEGVSSDR).

It belongs to the TRAFAC class YlqF/YawG GTPase family. RsgA subfamily.

It is found in the nucleus. Its subcellular location is the nucleolus. GTPase involved in pre-60S ribosomal subunit maturation. The polypeptide is Nuclear/nucleolar GTPase 2 (Oryza sativa subsp. indica (Rice)).